Reading from the N-terminus, the 490-residue chain is Betaine aldehyde dehydrogenase (490 aa).

Residues Thr-26, Ile-27, and Asp-93 each coordinate K(+). Gly-150–Trp-152 lines the NAD(+) pocket. Lys-162 (charge relay system) is an active-site residue. NAD(+) is bound at residue Lys-176–Glu-179. Val-180 contacts K(+). Gly-230 to Ser-233 contacts NAD(+). Leu-246 lines the K(+) pocket. Residue Glu-252 is the Proton acceptor of the active site. The NAD(+) site is built by Gly-254, Cys-286, and Glu-387. The active-site Nucleophile is Cys-286. At Cys-286 the chain carries Cysteine sulfenic acid (-SOH). K(+)-binding residues include Lys-457 and Gly-460. Catalysis depends on Glu-464, which acts as the Charge relay system.

Belongs to the aldehyde dehydrogenase family. As to quaternary structure, dimer of dimers. K(+) is required as a cofactor.

The catalysed reaction is betaine aldehyde + NAD(+) + H2O = glycine betaine + NADH + 2 H(+). The protein operates within amine and polyamine biosynthesis; betaine biosynthesis via choline pathway; betaine from betaine aldehyde: step 1/1. In terms of biological role, involved in the biosynthesis of the osmoprotectant glycine betaine. Catalyzes the irreversible oxidation of betaine aldehyde to the corresponding acid. This Escherichia coli O9:H4 (strain HS) protein is Betaine aldehyde dehydrogenase.